We begin with the raw amino-acid sequence, 274 residues long: Envelope glycoprotein L (274 aa).

Residues methionine 1 to serine 21 form the signal peptide. Residues valine 51–valine 251 enclose the gL betaherpesvirus-type domain. Cysteine 156 and cysteine 161 are joined by a disulfide.

This sequence belongs to the herpesviridae glycoprotein L (gL) family. Betaherpesvirinae gL subfamily. Interacts with glycoprotein H (gH); this interaction is necessary for the correct processing and cell surface expression of gH.

Its subcellular location is the virion membrane. It is found in the host cell membrane. The protein localises to the host Golgi apparatus. It localises to the host trans-Golgi network. Functionally, the heterodimer glycoprotein H-glycoprotein L is required for the fusion of viral and plasma membranes leading to virus entry into the host cell. Acts as a functional inhibitor of gH and maintains gH in an inhibited form. Upon binding to host integrins, gL dissociates from gH leading to activation of the viral fusion glycoproteins gB and gH. The chain is Envelope glycoprotein L from Murid herpesvirus 1 (strain Smith) (MuHV-1).